The following is a 380-amino-acid chain: MEITLEKALKEIEGNKFFKVLKENDLVKVSYRFNAPQTFDTPLKRELRGITFSSKTGRVVSRPFHKFFNLGEHPETEKERLKGKLFILREKLDGTMLHPAVVEGRVRLFTQKDFANPQIEKGEELLRRNDKLLKATRRLLEKGLTPIFELISPEFQLVIPYETEELILTEVRDNRTGHYLLEEAENELIQMGFKLPRKRVGTVEEAERLIEEAENVEGFVAKNFDESEPFPLFVKIKSPWYHRAHYAFTYLHNIPDHKLFNLFLNNRADDIFATVTNPAVKEKKSRRLKILTDIYHSLLSSAEKLSQLYGKVKEETLKAEAQKELKKIEREFKEELKLFNFPVEHLTEAARLAKQKKKFDKFLGTKLYTALKHQTVKLKT.

In terms of biological role, putative RNA ligase. Is able to catalyze the adenylation reaction of ssDNA 3'-terminal phosphate (ssDNA 3'p) to 3'-adenylated DNA (ssDNA 3'pp5'A). This chain is Putative RNA ligase, found in Thermovibrio ammonificans (strain DSM 15698 / JCM 12110 / HB-1).